Here is a 79-residue protein sequence, read N- to C-terminus: Conotoxin Kt6.1 (79 aa).

Positions 1–22 (MKLTCVLIISVLFLTASQLITA) are cleaved as a signal peptide. The propeptide occupies 23–47 (VYSRDKQQYRAARLRDEMRNLKGAR). Disulfide bonds link cysteine 49-cysteine 62, cysteine 56-cysteine 67, and cysteine 61-cysteine 77. A 4-hydroxyproline mark is found at proline 60 and proline 63.

The protein belongs to the conotoxin O1 superfamily. As to expression, expressed by the venom duct.

The protein resides in the secreted. Functionally, ion channel inhibitor that inhibits the increase in intracellular calcium upon depolarization in DRG neurons. In vivo, both intraperitoneal and intracranial injections into mice induce hyperactivity. The chain is Conotoxin Kt6.1 from Conus kintoki (Cone snail).